A 269-amino-acid chain; its full sequence is Putative pyruvate, phosphate dikinase regulatory protein (269 aa).

Position 147-154 (147-154 (GLSRTSKT)) interacts with ADP.

This sequence belongs to the pyruvate, phosphate/water dikinase regulatory protein family. PDRP subfamily.

It carries out the reaction N(tele)-phospho-L-histidyl/L-threonyl-[pyruvate, phosphate dikinase] + ADP = N(tele)-phospho-L-histidyl/O-phospho-L-threonyl-[pyruvate, phosphate dikinase] + AMP + H(+). It catalyses the reaction N(tele)-phospho-L-histidyl/O-phospho-L-threonyl-[pyruvate, phosphate dikinase] + phosphate + H(+) = N(tele)-phospho-L-histidyl/L-threonyl-[pyruvate, phosphate dikinase] + diphosphate. Functionally, bifunctional serine/threonine kinase and phosphorylase involved in the regulation of the pyruvate, phosphate dikinase (PPDK) by catalyzing its phosphorylation/dephosphorylation. This is Putative pyruvate, phosphate dikinase regulatory protein from Clostridium botulinum (strain 657 / Type Ba4).